The primary structure comprises 162 residues: Small ribosomal subunit protein uS13 (162 aa).

The interval 142–162 (RGQRTKSTGRRGSTVGVSRKK) is disordered.

Belongs to the universal ribosomal protein uS13 family. As to quaternary structure, part of the 30S ribosomal subunit. Forms a loose heterodimer with protein S19. Forms two bridges to the 50S subunit in the 70S ribosome.

In terms of biological role, located at the top of the head of the 30S subunit, it contacts several helices of the 16S rRNA. In the 70S ribosome it contacts the 23S rRNA (bridge B1a) and protein L5 of the 50S subunit (bridge B1b), connecting the 2 subunits; these bridges are implicated in subunit movement. This is Small ribosomal subunit protein uS13 from Methanosarcina acetivorans (strain ATCC 35395 / DSM 2834 / JCM 12185 / C2A).